The sequence spans 284 residues: uncharacterized protein (284 aa).

The 130-residue stretch at 4–133 (PLHLFWHRRD…AVHRQWDQLL (130 aa)) folds into the Photolyase/cryptochrome alpha/beta domain.

This is an uncharacterized protein from Synechococcus sp. (strain PCC 6716).